A 425-amino-acid polypeptide reads, in one-letter code: Riboflavin biosynthesis protein RibBA (425 aa).

Positions 1-204 are DHBP synthase; that stretch reads MTRLDSVERA…IADLIEWRRK (204 aa). Residues 28-29, Asp-33, 141-145, and Glu-165 each bind D-ribulose 5-phosphate; these read RE and RPGHT. Glu-29 is a Mg(2+) binding site. His-144 contacts Mg(2+). The GTP cyclohydrolase II stretch occupies residues 205-425; it reads HEKHIERVAE…HLPGEFGGAL (221 aa). Position 259–263 (259–263) interacts with GTP; that stretch reads RVHSE. The Zn(2+) site is built by Cys-264, Cys-275, and Cys-277. Residues Gln-280, 303–305, and Thr-325 contribute to the GTP site; that span reads EGR. Residue Asp-337 is the Proton acceptor; for GTP cyclohydrolase activity of the active site. Arg-339 serves as the catalytic Nucleophile; for GTP cyclohydrolase activity. GTP-binding residues include Thr-360 and Lys-365.

It in the N-terminal section; belongs to the DHBP synthase family. In the C-terminal section; belongs to the GTP cyclohydrolase II family. Mg(2+) serves as cofactor. Requires Mn(2+) as cofactor. Zn(2+) is required as a cofactor.

The catalysed reaction is D-ribulose 5-phosphate = (2S)-2-hydroxy-3-oxobutyl phosphate + formate + H(+). The enzyme catalyses GTP + 4 H2O = 2,5-diamino-6-hydroxy-4-(5-phosphoribosylamino)-pyrimidine + formate + 2 phosphate + 3 H(+). Its pathway is cofactor biosynthesis; riboflavin biosynthesis; 2-hydroxy-3-oxobutyl phosphate from D-ribulose 5-phosphate: step 1/1. The protein operates within cofactor biosynthesis; riboflavin biosynthesis; 5-amino-6-(D-ribitylamino)uracil from GTP: step 1/4. Functionally, catalyzes the conversion of D-ribulose 5-phosphate to formate and 3,4-dihydroxy-2-butanone 4-phosphate. In terms of biological role, catalyzes the conversion of GTP to 2,5-diamino-6-ribosylamino-4(3H)-pyrimidinone 5'-phosphate (DARP), formate and pyrophosphate. The protein is Riboflavin biosynthesis protein RibBA of Mycobacterium bovis (strain ATCC BAA-935 / AF2122/97).